The following is a 159-amino-acid chain: ATP synthase subunit b (159 aa).

The helical transmembrane segment at 4 to 24 threads the bilayer; that stretch reads VGINGTLIVQLVTFVILVALL.

Belongs to the ATPase B chain family. F-type ATPases have 2 components, F(1) - the catalytic core - and F(0) - the membrane proton channel. F(1) has five subunits: alpha(3), beta(3), gamma(1), delta(1), epsilon(1). F(0) has three main subunits: a(1), b(2) and c(10-14). The alpha and beta chains form an alternating ring which encloses part of the gamma chain. F(1) is attached to F(0) by a central stalk formed by the gamma and epsilon chains, while a peripheral stalk is formed by the delta and b chains.

The protein resides in the cell inner membrane. In terms of biological role, f(1)F(0) ATP synthase produces ATP from ADP in the presence of a proton or sodium gradient. F-type ATPases consist of two structural domains, F(1) containing the extramembraneous catalytic core and F(0) containing the membrane proton channel, linked together by a central stalk and a peripheral stalk. During catalysis, ATP synthesis in the catalytic domain of F(1) is coupled via a rotary mechanism of the central stalk subunits to proton translocation. Component of the F(0) channel, it forms part of the peripheral stalk, linking F(1) to F(0). This is ATP synthase subunit b from Acidithiobacillus ferridurans.